An 80-amino-acid polypeptide reads, in one-letter code: RNA-binding protein Hfq (80 aa).

The region spanning 9 to 68 is the Sm domain; it reads EPFLNALRKERIPVSIYLVNGIKLQGQIDSFDQFVVLLKNTVSQMVYKHAISTIVPSRPV.

The protein belongs to the Hfq family. Homohexamer.

Functionally, RNA chaperone that binds small regulatory RNA (sRNAs) and mRNAs to facilitate mRNA translational regulation in response to envelope stress, environmental stress and changes in metabolite concentrations. Also binds with high specificity to tRNAs. The chain is RNA-binding protein Hfq from Thioalkalivibrio sulfidiphilus (strain HL-EbGR7).